Reading from the N-terminus, the 1331-residue chain is DNA-directed RNA polymerase subunit beta' (1331 aa).

4 residues coordinate Zn(2+): C60, C62, C75, and C78. Residues D535, D537, and D539 each contribute to the Mg(2+) site. 4 residues coordinate Zn(2+): C902, C979, C986, and C989.

The protein belongs to the RNA polymerase beta' chain family. In terms of assembly, the RNAP catalytic core consists of 2 alpha, 1 beta, 1 beta' and 1 omega subunit. When a sigma factor is associated with the core the holoenzyme is formed, which can initiate transcription. Mg(2+) is required as a cofactor. It depends on Zn(2+) as a cofactor.

It carries out the reaction RNA(n) + a ribonucleoside 5'-triphosphate = RNA(n+1) + diphosphate. Its function is as follows. DNA-dependent RNA polymerase catalyzes the transcription of DNA into RNA using the four ribonucleoside triphosphates as substrates. This chain is DNA-directed RNA polymerase subunit beta', found in Corynebacterium aurimucosum (strain ATCC 700975 / DSM 44827 / CIP 107346 / CN-1) (Corynebacterium nigricans).